The chain runs to 1097 residues: DNA-directed RNA polymerase subunit beta (1097 aa).

The disordered stretch occupies residues 1073–1097 (DVNPRRSTPSRPTYESLGVADYDED).

Belongs to the RNA polymerase beta chain family. As to quaternary structure, in cyanobacteria the RNAP catalytic core is composed of 2 alpha, 1 beta, 1 beta', 1 gamma and 1 omega subunit. When a sigma factor is associated with the core the holoenzyme is formed, which can initiate transcription.

The enzyme catalyses RNA(n) + a ribonucleoside 5'-triphosphate = RNA(n+1) + diphosphate. Its function is as follows. DNA-dependent RNA polymerase catalyzes the transcription of DNA into RNA using the four ribonucleoside triphosphates as substrates. The sequence is that of DNA-directed RNA polymerase subunit beta from Synechococcus sp. (strain CC9311).